A 166-amino-acid polypeptide reads, in one-letter code: Ribosome maturation factor RimM (166 aa).

One can recognise a PRC barrel domain in the interval Glu95–Leu164.

It belongs to the RimM family. Binds ribosomal protein uS19.

The protein resides in the cytoplasm. An accessory protein needed during the final step in the assembly of 30S ribosomal subunit, possibly for assembly of the head region. Essential for efficient processing of 16S rRNA. May be needed both before and after RbfA during the maturation of 16S rRNA. It has affinity for free ribosomal 30S subunits but not for 70S ribosomes. This is Ribosome maturation factor RimM from Aquifex aeolicus (strain VF5).